The chain runs to 472 residues: Carboxypeptidase E (472 aa).

The signal sequence occupies residues 1–21; the sequence is MLHAMRPVLLVAALLAVTAHA. One can recognise a Peptidase M14 domain in the interval 39–359; it reads HYHNQAQLEA…KSIFEYVWKS (321 aa). Zn(2+)-binding residues include His-101 and Glu-104. A glycan (N-linked (GlcNAc...) asparagine) is linked at Asn-134. His-232 is a binding site for Zn(2+). The Proton donor/acceptor role is filled by Glu-329. 2 N-linked (GlcNAc...) asparagine glycosylation sites follow: Asn-385 and Asn-428.

It belongs to the peptidase M14 family. Requires Zn(2+) as cofactor. In terms of tissue distribution, expression is restricted to the nervous system.

It localises to the cell projection. It is found in the axon. The protein localises to the perikaryon. Its subcellular location is the cytoplasmic vesicle. The protein resides in the secretory vesicle lumen. It carries out the reaction Release of C-terminal arginine or lysine residues from polypeptides.. Its function is as follows. During FMRFamide-like peptide (FaRPs or FLP) and neuropeptide-like protein (NLP) precursor processing, catalyzes the removal of Arg or Lys residues from the C-terminus following the initial endoprotease cleavage. By processing neuropeptides, modulates basal acetylcholine release at the ventral cord neuromuscular junctions. Involved in egg-laying, defecation and locomotion. By processing FLP neuropeptides, regulates the turning step of male mating behavior. Involved in reducing pharyngeal pumping in response to high CO(2) levels. This chain is Carboxypeptidase E, found in Caenorhabditis elegans.